The primary structure comprises 411 residues: 2,3-bisphosphoglycerate-independent phosphoglycerate mutase 1 (411 aa).

This sequence belongs to the BPG-independent phosphoglycerate mutase family. A-PGAM subfamily. Homotetramer. It depends on Mg(2+) as a cofactor.

The enzyme catalyses (2R)-2-phosphoglycerate = (2R)-3-phosphoglycerate. It participates in carbohydrate degradation; glycolysis; pyruvate from D-glyceraldehyde 3-phosphate: step 3/5. Inhibited to approximately 20% by EDTA. In terms of biological role, catalyzes the interconversion of 2-phosphoglycerate and 3-phosphoglycerate. This chain is 2,3-bisphosphoglycerate-independent phosphoglycerate mutase 1 (apgM1), found in Methanocaldococcus jannaschii (strain ATCC 43067 / DSM 2661 / JAL-1 / JCM 10045 / NBRC 100440) (Methanococcus jannaschii).